A 103-amino-acid chain; its full sequence is DNA-binding protein TRF1 (103 aa).

Functionally, DNA-binding protein that recognizes the inverted terminal repeats of the pGKl linear DNA plasmids. In Kluyveromyces lactis (strain ATCC 8585 / CBS 2359 / DSM 70799 / NBRC 1267 / NRRL Y-1140 / WM37) (Yeast), this protein is DNA-binding protein TRF1 (TRF1).